A 213-amino-acid polypeptide reads, in one-letter code: Protein-L-isoaspartate O-methyltransferase (213 aa).

The active site involves Ser58.

Belongs to the methyltransferase superfamily. L-isoaspartyl/D-aspartyl protein methyltransferase family.

The protein resides in the cytoplasm. The enzyme catalyses [protein]-L-isoaspartate + S-adenosyl-L-methionine = [protein]-L-isoaspartate alpha-methyl ester + S-adenosyl-L-homocysteine. Functionally, catalyzes the methyl esterification of L-isoaspartyl residues in peptides and proteins that result from spontaneous decomposition of normal L-aspartyl and L-asparaginyl residues. It plays a role in the repair and/or degradation of damaged proteins. In Chlorobaculum tepidum (strain ATCC 49652 / DSM 12025 / NBRC 103806 / TLS) (Chlorobium tepidum), this protein is Protein-L-isoaspartate O-methyltransferase.